The following is a 217-amino-acid chain: Probable GTP-binding protein EngB (217 aa).

The 178-residue stretch at 40–217 folds into the EngB-type G domain; the sequence is DVPEIAFAGR…RAAVLQDAMG (178 aa). Residues 48–55, 75–79, 95–98, 162–165, and 196–198 each bind GTP; these read GRSNVGKS, GRTQE, DMPG, TKAD, and TSS. 2 residues coordinate Mg(2+): Ser-55 and Thr-77.

This sequence belongs to the TRAFAC class TrmE-Era-EngA-EngB-Septin-like GTPase superfamily. EngB GTPase family. It depends on Mg(2+) as a cofactor.

In terms of biological role, necessary for normal cell division and for the maintenance of normal septation. This Novosphingobium aromaticivorans (strain ATCC 700278 / DSM 12444 / CCUG 56034 / CIP 105152 / NBRC 16084 / F199) protein is Probable GTP-binding protein EngB.